The primary structure comprises 195 residues: Rho-related protein racB (195 aa).

10-17 contacts GTP; the sequence is GDGAVGKT. The Effector region motif lies at 32–40; it reads YVPTVFDNY. GTP contacts are provided by residues 57–61 and 115–118; these read DTAGQ and TKCD. Cysteine methyl ester is present on C192. C192 is lipidated: S-geranylgeranyl cysteine. Residues 193–195 constitute a propeptide, removed in mature form; sequence SIL.

The protein belongs to the small GTPase superfamily. Rho family. Interacts with pakB.

The protein resides in the cell membrane. The chain is Rho-related protein racB (racB) from Dictyostelium discoideum (Social amoeba).